The following is a 498-amino-acid chain: UDP-N-acetylmuramate--L-alanine ligase (498 aa).

120-126 (GSHGKTT) is an ATP binding site.

The protein belongs to the MurCDEF family.

It is found in the cytoplasm. It catalyses the reaction UDP-N-acetyl-alpha-D-muramate + L-alanine + ATP = UDP-N-acetyl-alpha-D-muramoyl-L-alanine + ADP + phosphate + H(+). It functions in the pathway cell wall biogenesis; peptidoglycan biosynthesis. Its function is as follows. Cell wall formation. The sequence is that of UDP-N-acetylmuramate--L-alanine ligase from Rickettsia typhi (strain ATCC VR-144 / Wilmington).